Here is a 189-residue protein sequence, read N- to C-terminus: MKTFAPSYLKHQFLIAMPHMADPNFAHTLTYIVEHNANGAMGLVINRPQELNLADILEQLRPNEQPPASTLQVPIYQGGPVQTDRGFVLHSDECSFQATVALEGLSLTTSQDVLLAIAAGVGPKKSLITLGYAGWEAGQLEAELADNAWLNCPFDPEIIFGLASDQRLGAAAASLGINLSLLTSQAGHA.

The protein belongs to the UPF0301 (AlgH) family.

The protein is UPF0301 protein PSEEN5058 of Pseudomonas entomophila (strain L48).